The chain runs to 333 residues: Fructose-1,6-bisphosphatase class 1 1 (333 aa).

Mg(2+) is bound by residues E81, D100, L102, and D103. Substrate is bound by residues 103 to 106 and N191; that span reads DGSS. E263 serves as a coordination point for Mg(2+).

Belongs to the FBPase class 1 family. Homotetramer. Requires Mg(2+) as cofactor.

It is found in the cytoplasm. It catalyses the reaction beta-D-fructose 1,6-bisphosphate + H2O = beta-D-fructose 6-phosphate + phosphate. It functions in the pathway carbohydrate biosynthesis; Calvin cycle. This chain is Fructose-1,6-bisphosphatase class 1 1, found in Cereibacter sphaeroides (strain ATCC 17023 / DSM 158 / JCM 6121 / CCUG 31486 / LMG 2827 / NBRC 12203 / NCIMB 8253 / ATH 2.4.1.) (Rhodobacter sphaeroides).